Here is a 348-residue protein sequence, read N- to C-terminus: UDP-3-O-acylglucosamine N-acyltransferase (348 aa).

H248 acts as the Proton acceptor in catalysis.

This sequence belongs to the transferase hexapeptide repeat family. LpxD subfamily. Homotrimer.

It carries out the reaction a UDP-3-O-[(3R)-3-hydroxyacyl]-alpha-D-glucosamine + a (3R)-hydroxyacyl-[ACP] = a UDP-2-N,3-O-bis[(3R)-3-hydroxyacyl]-alpha-D-glucosamine + holo-[ACP] + H(+). The protein operates within bacterial outer membrane biogenesis; LPS lipid A biosynthesis. In terms of biological role, catalyzes the N-acylation of UDP-3-O-acylglucosamine using 3-hydroxyacyl-ACP as the acyl donor. Is involved in the biosynthesis of lipid A, a phosphorylated glycolipid that anchors the lipopolysaccharide to the outer membrane of the cell. This is UDP-3-O-acylglucosamine N-acyltransferase from Rippkaea orientalis (strain PCC 8801 / RF-1) (Cyanothece sp. (strain PCC 8801)).